The following is a 69-amino-acid chain: Small ribosomal subunit protein bS21 (69 aa).

This sequence belongs to the bacterial ribosomal protein bS21 family.

This chain is Small ribosomal subunit protein bS21 (rpsU), found in Treponema pallidum (strain Nichols).